The chain runs to 331 residues: Adenosine deaminase (331 aa).

Residues His12 and His14 each coordinate Zn(2+). Substrate is bound by residues His14, Asp16, and Gly170. Position 197 (His197) interacts with Zn(2+). Glu200 acts as the Proton donor in catalysis. Asp278 contributes to the Zn(2+) binding site. Residue Asp279 coordinates substrate.

This sequence belongs to the metallo-dependent hydrolases superfamily. Adenosine and AMP deaminases family. Adenosine deaminase subfamily. Zn(2+) is required as a cofactor.

The catalysed reaction is adenosine + H2O + H(+) = inosine + NH4(+). The enzyme catalyses 2'-deoxyadenosine + H2O + H(+) = 2'-deoxyinosine + NH4(+). In terms of biological role, catalyzes the hydrolytic deamination of adenosine and 2-deoxyadenosine. This chain is Adenosine deaminase, found in Shewanella baltica (strain OS155 / ATCC BAA-1091).